Reading from the N-terminus, the 874-residue chain is Alanine--tRNA ligase (874 aa).

Residues His-562, His-566, Cys-665, and His-669 each coordinate Zn(2+).

The protein belongs to the class-II aminoacyl-tRNA synthetase family. Zn(2+) is required as a cofactor.

The protein localises to the cytoplasm. It catalyses the reaction tRNA(Ala) + L-alanine + ATP = L-alanyl-tRNA(Ala) + AMP + diphosphate. Its function is as follows. Catalyzes the attachment of alanine to tRNA(Ala) in a two-step reaction: alanine is first activated by ATP to form Ala-AMP and then transferred to the acceptor end of tRNA(Ala). Also edits incorrectly charged Ser-tRNA(Ala) and Gly-tRNA(Ala) via its editing domain. This is Alanine--tRNA ligase from Pseudomonas savastanoi pv. phaseolicola (strain 1448A / Race 6) (Pseudomonas syringae pv. phaseolicola (strain 1448A / Race 6)).